Consider the following 179-residue polypeptide: Peptide deformylase (179 aa).

Positions 102 and 144 each coordinate Fe cation. The active site involves Glu145. His148 is a binding site for Fe cation.

The protein belongs to the polypeptide deformylase family. Fe(2+) serves as cofactor.

The catalysed reaction is N-terminal N-formyl-L-methionyl-[peptide] + H2O = N-terminal L-methionyl-[peptide] + formate. Its function is as follows. Removes the formyl group from the N-terminal Met of newly synthesized proteins. Requires at least a dipeptide for an efficient rate of reaction. N-terminal L-methionine is a prerequisite for activity but the enzyme has broad specificity at other positions. The protein is Peptide deformylase of Wolbachia pipientis subsp. Culex pipiens (strain wPip).